Consider the following 685-residue polypeptide: Delta-like protein 4 (685 aa).

An N-terminal signal peptide occupies residues 1-26; that stretch reads MAAASRSASGWALLLLVALWQQRAAG. The Extracellular segment spans residues 27-529; the sequence is SGVFQLQLQE…PVGLPPSFPW (503 aa). 2 cysteine pairs are disulfide-bonded: Cys50/Cys54 and Cys61/Cys74. 2 N-linked (GlcNAc...) asparagine glycosylation sites follow: Asn108 and Asn183. A DSL domain is found at 173–217; it reads VICSDNYYGDNCSRLCKKRNDHFGHYVCQPDGNLSCLPGWTGEYC. Cys175 and Cys184 form a disulfide bridge. Interaction with Notch1 stretches follow at residues 185 to 187 and 191 to 195; these read SRL and RNDHF. Residues Cys188 and Cys200 are joined by a disulfide bond. Asn205 is a glycosylation site (N-linked (GlcNAc...) asparagine). 25 cysteine pairs are disulfide-bonded: Cys208-Cys217, Cys222-Cys233, Cys226-Cys239, Cys241-Cys250, Cys253-Cys264, Cys259-Cys270, Cys272-Cys281, Cys288-Cys300, Cys294-Cys310, Cys312-Cys321, Cys328-Cys339, Cys333-Cys348, Cys350-Cys359, Cys366-Cys377, Cys371-Cys388, Cys390-Cys399, Cys406-Cys417, Cys411-Cys426, Cys428-Cys437, Cys444-Cys455, Cys449-Cys464, Cys466-Cys475, Cys484-Cys495, Cys489-Cys506, and Cys508-Cys517. EGF-like domains follow at residues 218-251, 252-282, 284-322, 324-360, 362-400, 402-438, 440-476, and 480-518; these read QQPI…RLCN, ECIP…LFCD, DLNY…VDCE, ELSE…LHCE, STLS…SNCE, KVDR…TYCE, HVSD…RRCE, and SIDA…SRCE. A glycan (N-linked (GlcNAc...) asparagine) is linked at Asn393. A helical membrane pass occupies residues 530–550; it reads VAVSLGVGLAVLLVLLGMVAV. Residues 551–685 are Cytoplasmic-facing; the sequence is AVRQLRLRRP…RNECVIATEV (135 aa).

In terms of assembly, interacts with NOTCH4. Interacts (via N-terminal DSL and MNNL domains) with NOTCH1 (via EGF-like domains). As to expression, expressed in vascular endothelium.

It localises to the cell membrane. Involved in the Notch signaling pathway as Notch ligand. Activates NOTCH1 and NOTCH4. Involved in angiogenesis; negatively regulates endothelial cell proliferation and migration and angiogenic sprouting. Essential for retinal progenitor proliferation. Required for suppressing rod fates in late retinal progenitors as well as for proper generation of other retinal cell types. During spinal cord neurogenesis, inhibits V2a interneuron fate. The sequence is that of Delta-like protein 4 (DLL4) from Homo sapiens (Human).